A 323-amino-acid polypeptide reads, in one-letter code: uncharacterized protein (323 aa).

This is an uncharacterized protein from Thermotoga maritima (strain ATCC 43589 / DSM 3109 / JCM 10099 / NBRC 100826 / MSB8).